The primary structure comprises 77 residues: Serine protease inhibitor 2 (77 aa).

Residues 1–17 form the signal peptide; it reads MMFTPLIVLTLLVLATA. Intrachain disulfides connect cysteine 21–cysteine 53, cysteine 30–cysteine 48, cysteine 33–cysteine 44, cysteine 37–cysteine 74, and cysteine 55–cysteine 68. The 54-residue stretch at 21 to 74 folds into the TIL domain; that stretch reads CGPNEQWSDCPKCELQCGESDKPCATICGEPKCYCSPDKYRRIPDGRCIRKIQC.

It is found in the secreted. Functionally, defends the organism against the host's proteinases. The polypeptide is Serine protease inhibitor 2 (Anisakis simplex (Herring worm)).